We begin with the raw amino-acid sequence, 503 residues long: Maturase K (503 aa).

Belongs to the intron maturase 2 family. MatK subfamily.

It is found in the plastid. It localises to the chloroplast. Functionally, usually encoded in the trnK tRNA gene intron. Probably assists in splicing its own and other chloroplast group II introns. In Lathyrus vestitus (Pacific pea), this protein is Maturase K.